Here is a 714-residue protein sequence, read N- to C-terminus: Fatty acid oxidation complex subunit alpha (714 aa).

The segment at 1–190 (MEMASAFTLN…KLGLVDDVVP (190 aa)) is enoyl-CoA hydratase. The segment at 306–714 (APLNSVGILG…FWKTTATDLQ (409 aa)) is 3-hydroxyacyl-CoA dehydrogenase.

The protein in the N-terminal section; belongs to the enoyl-CoA hydratase/isomerase family. It in the central section; belongs to the 3-hydroxyacyl-CoA dehydrogenase family. In terms of assembly, heterotetramer of two alpha chains (FadJ) and two beta chains (FadI).

The protein resides in the cytoplasm. It carries out the reaction a (3S)-3-hydroxyacyl-CoA = a (2E)-enoyl-CoA + H2O. It catalyses the reaction a 4-saturated-(3S)-3-hydroxyacyl-CoA = a (3E)-enoyl-CoA + H2O. The catalysed reaction is a (3S)-3-hydroxyacyl-CoA + NAD(+) = a 3-oxoacyl-CoA + NADH + H(+). The enzyme catalyses (3S)-3-hydroxybutanoyl-CoA = (3R)-3-hydroxybutanoyl-CoA. Its pathway is lipid metabolism; fatty acid beta-oxidation. Its function is as follows. Catalyzes the formation of a hydroxyacyl-CoA by addition of water on enoyl-CoA. Also exhibits 3-hydroxyacyl-CoA epimerase and 3-hydroxyacyl-CoA dehydrogenase activities. This is Fatty acid oxidation complex subunit alpha from Shigella boydii serotype 4 (strain Sb227).